A 1337-amino-acid polypeptide reads, in one-letter code: Phosphoribosylformylglycinamidine synthase (1337 aa).

The residue at position 215 (S215) is a Phosphoserine. ATP-binding positions include 322 to 333 and 402 to 404; these read GATTGTGGRIRD and AGF. Residues T619 and T622 each carry the phosphothreonine modification. ATP is bound at residue A705. Mg(2+) is bound by residues D706, E745, N749, and D908. Residue S910 participates in ATP binding. Residues 1063–1301 enclose the Glutamine amidotransferase type-1 domain; sequence RVAILREEGS…ALMPHPERAV (239 aa). C1157 serves as the catalytic Nucleophile. Residues H1296 and E1298 contribute to the active site.

It in the N-terminal section; belongs to the FGAMS family.

Its subcellular location is the cytoplasm. It carries out the reaction N(2)-formyl-N(1)-(5-phospho-beta-D-ribosyl)glycinamide + L-glutamine + ATP + H2O = 2-formamido-N(1)-(5-O-phospho-beta-D-ribosyl)acetamidine + L-glutamate + ADP + phosphate + H(+). It participates in purine metabolism; IMP biosynthesis via de novo pathway; 5-amino-1-(5-phospho-D-ribosyl)imidazole from N(2)-formyl-N(1)-(5-phospho-D-ribosyl)glycinamide: step 1/2. Functionally, phosphoribosylformylglycinamidine synthase involved in the purines biosynthetic pathway. Catalyzes the ATP-dependent conversion of formylglycinamide ribonucleotide (FGAR) and glutamine to yield formylglycinamidine ribonucleotide (FGAM) and glutamate. In Mus musculus (Mouse), this protein is Phosphoribosylformylglycinamidine synthase (Pfas).